Reading from the N-terminus, the 327-residue chain is Tyrosine--tRNA ligase (327 aa).

An L-tyrosine-binding site is contributed by Y33. The short motif at 38-46 is the 'HIGH' region element; it reads PSGVLHLGH. Residues Y154, Q158, D161, and Q176 each coordinate L-tyrosine. The 'KMSKS' region signature appears at 212–216; that stretch reads KMSSS. An ATP-binding site is contributed by S215.

This sequence belongs to the class-I aminoacyl-tRNA synthetase family. TyrS type 3 subfamily. As to quaternary structure, homodimer.

It is found in the cytoplasm. The enzyme catalyses tRNA(Tyr) + L-tyrosine + ATP = L-tyrosyl-tRNA(Tyr) + AMP + diphosphate + H(+). Catalyzes the attachment of tyrosine to tRNA(Tyr) in a two-step reaction: tyrosine is first activated by ATP to form Tyr-AMP and then transferred to the acceptor end of tRNA(Tyr). The sequence is that of Tyrosine--tRNA ligase from Halobacterium salinarum (strain ATCC 29341 / DSM 671 / R1).